The sequence spans 146 residues: Large ribosomal subunit protein mL41 (146 aa).

A mitochondrion-targeting transit peptide spans 1–16 (MKGSPISQFSKTSINA).

This sequence belongs to the mitochondrion-specific ribosomal protein mL41 family. Component of the mitochondrial large ribosomal subunit (mt-LSU). Mature yeast 74S mitochondrial ribosomes consist of a small (37S) and a large (54S) subunit. The 37S small subunit contains a 15S ribosomal RNA (15S mt-rRNA) and 34 different proteins. The 54S large subunit contains a 21S rRNA (21S mt-rRNA) and 46 different proteins.

It localises to the mitochondrion. Functionally, component of the mitochondrial ribosome (mitoribosome), a dedicated translation machinery responsible for the synthesis of mitochondrial genome-encoded proteins, including at least some of the essential transmembrane subunits of the mitochondrial respiratory chain. The mitoribosomes are attached to the mitochondrial inner membrane and translation products are cotranslationally integrated into the membrane. This is Large ribosomal subunit protein mL41 (MRPL27) from Saccharomyces cerevisiae (strain ATCC 204508 / S288c) (Baker's yeast).